A 171-amino-acid chain; its full sequence is MTKWFNVGKIVNTHGVRGEIRVISRTDFPEERYKVGNTLYISNEKGTDYLPVKVTSHRQHKTFDLLTFEGYNNVDEVEKFKGSLIKVPEEQLGELAEGEYYYHEIIGCSVVTEEGEALGTIKEILSPGANDVWVIKRPKGQDLLIPYIDDVVLQVNIENKLVTIHVMEGLL.

Residues 97-170 (EGEYYYHEII…LVTIHVMEGL (74 aa)) form the PRC barrel domain.

Belongs to the RimM family. In terms of assembly, binds ribosomal protein uS19.

Its subcellular location is the cytoplasm. Its function is as follows. An accessory protein needed during the final step in the assembly of 30S ribosomal subunit, possibly for assembly of the head region. Essential for efficient processing of 16S rRNA. May be needed both before and after RbfA during the maturation of 16S rRNA. It has affinity for free ribosomal 30S subunits but not for 70S ribosomes. In Bacillus cereus (strain ATCC 14579 / DSM 31 / CCUG 7414 / JCM 2152 / NBRC 15305 / NCIMB 9373 / NCTC 2599 / NRRL B-3711), this protein is Ribosome maturation factor RimM.